The chain runs to 123 residues: UPF0102 protein CLD_2200 (123 aa).

This sequence belongs to the UPF0102 family.

This is UPF0102 protein CLD_2200 from Clostridium botulinum (strain Okra / Type B1).